A 431-amino-acid polypeptide reads, in one-letter code: NADH-quinone oxidoreductase subunit D 2 (431 aa).

Positions M1–A27 are disordered.

The protein belongs to the complex I 49 kDa subunit family. In terms of assembly, NDH-1 is composed of 14 different subunits. Subunits NuoB, C, D, E, F, and G constitute the peripheral sector of the complex.

It is found in the cell inner membrane. It carries out the reaction a quinone + NADH + 5 H(+)(in) = a quinol + NAD(+) + 4 H(+)(out). In terms of biological role, NDH-1 shuttles electrons from NADH, via FMN and iron-sulfur (Fe-S) centers, to quinones in the respiratory chain. The immediate electron acceptor for the enzyme in this species is believed to be ubiquinone. Couples the redox reaction to proton translocation (for every two electrons transferred, four hydrogen ions are translocated across the cytoplasmic membrane), and thus conserves the redox energy in a proton gradient. In Anaeromyxobacter sp. (strain Fw109-5), this protein is NADH-quinone oxidoreductase subunit D 2.